A 200-amino-acid chain; its full sequence is 3-isopropylmalate dehydratase small subunit (200 aa).

This sequence belongs to the LeuD family. LeuD type 1 subfamily. In terms of assembly, heterodimer of LeuC and LeuD.

The enzyme catalyses (2R,3S)-3-isopropylmalate = (2S)-2-isopropylmalate. It participates in amino-acid biosynthesis; L-leucine biosynthesis; L-leucine from 3-methyl-2-oxobutanoate: step 2/4. In terms of biological role, catalyzes the isomerization between 2-isopropylmalate and 3-isopropylmalate, via the formation of 2-isopropylmaleate. The protein is 3-isopropylmalate dehydratase small subunit of Pseudarthrobacter chlorophenolicus (strain ATCC 700700 / DSM 12829 / CIP 107037 / JCM 12360 / KCTC 9906 / NCIMB 13794 / A6) (Arthrobacter chlorophenolicus).